A 176-amino-acid polypeptide reads, in one-letter code: ATP-dependent protease subunit HslV (176 aa).

Residue Thr-2 is part of the active site. Na(+) is bound by residues Gly-157, Cys-160, and Thr-163.

This sequence belongs to the peptidase T1B family. HslV subfamily. In terms of assembly, a double ring-shaped homohexamer of HslV is capped on each side by a ring-shaped HslU homohexamer. The assembly of the HslU/HslV complex is dependent on binding of ATP.

It is found in the cytoplasm. It catalyses the reaction ATP-dependent cleavage of peptide bonds with broad specificity.. Allosterically activated by HslU binding. Functionally, protease subunit of a proteasome-like degradation complex believed to be a general protein degrading machinery. The polypeptide is ATP-dependent protease subunit HslV (Proteus mirabilis (strain HI4320)).